A 153-amino-acid polypeptide reads, in one-letter code: Putative ATP synthase subunit f, mitochondrial (153 aa).

It belongs to the ATPase F chain family. In terms of assembly, subunit of the F-type ATPase which has 2 components, CF(1) - the catalytic core - and CF(0) - the membrane proton channel.

The protein resides in the mitochondrion membrane. Mitochondrial membrane ATP synthase (F(1)F(0) ATP synthase or Complex V) produces ATP from ADP in the presence of a proton gradient across the membrane which is generated by electron transport complexes of the respiratory chain. F-type ATPases consist of two structural domains, F(1) - containing the extramembraneous catalytic core and F(0) - containing the membrane proton channel, linked together by a central stalk and a peripheral stalk. During catalysis, ATP synthesis in the catalytic domain of F(1) is coupled via a rotary mechanism of the central stalk subunits to proton translocation. Part of the complex F(0) domain. Minor subunit located with subunit a in the membrane. In Caenorhabditis elegans, this protein is Putative ATP synthase subunit f, mitochondrial.